The primary structure comprises 252 residues: Thiazole synthase (252 aa).

K91 (schiff-base intermediate with DXP) is an active-site residue. 1-deoxy-D-xylulose 5-phosphate contacts are provided by residues G152, A179 to G180, and N201 to T202.

This sequence belongs to the ThiG family. Homotetramer. Forms heterodimers with either ThiH or ThiS.

The protein localises to the cytoplasm. The enzyme catalyses [ThiS sulfur-carrier protein]-C-terminal-Gly-aminoethanethioate + 2-iminoacetate + 1-deoxy-D-xylulose 5-phosphate = [ThiS sulfur-carrier protein]-C-terminal Gly-Gly + 2-[(2R,5Z)-2-carboxy-4-methylthiazol-5(2H)-ylidene]ethyl phosphate + 2 H2O + H(+). The protein operates within cofactor biosynthesis; thiamine diphosphate biosynthesis. In terms of biological role, catalyzes the rearrangement of 1-deoxy-D-xylulose 5-phosphate (DXP) to produce the thiazole phosphate moiety of thiamine. Sulfur is provided by the thiocarboxylate moiety of the carrier protein ThiS. In vitro, sulfur can be provided by H(2)S. The protein is Thiazole synthase of Gluconobacter oxydans (strain 621H) (Gluconobacter suboxydans).